Here is a 280-residue protein sequence, read N- to C-terminus: Aquaporin PIP2-7 (280 aa).

Met-1 is modified (N-acetylmethionine). Topologically, residues 1–38 are cytoplasmic; the sequence is MSKEVSEEGKTHHGKDYVDPPPAPLLDMGELKSWSFYR. Lys-3 bears the N6,N6-dimethyllysine mark. A helical transmembrane segment spans residues 39 to 59; the sequence is ALIAEFIATLLFLYVTVATVI. Topologically, residues 60–69 are extracellular; sequence GHKKQTGPCD. Residues 70-90 traverse the membrane as a helical segment; sequence GVGLLGIAWAFGGMIFVLVYC. The Cytoplasmic portion of the chain corresponds to 91–118; sequence TAGISGGHINPAVTFGLFLARKVSLVRA. Positions 100–102 match the NPA 1 motif; sequence NPA. The helical transmembrane segment at 119 to 139 threads the bilayer; sequence LGYMIAQCLGAICGVGFVKAF. The Extracellular portion of the chain corresponds to 140–160; the sequence is MKTPYNTLGGGANTVADGYSK. The helical transmembrane segment at 161–181 threads the bilayer; that stretch reads GTALGAEIIGTFVLVYTVFSA. Residues 182–192 lie on the Cytoplasmic side of the membrane; it reads TDPKRSARDSH. Residues 193–213 form a helical membrane-spanning segment; the sequence is IPVLAPLPIGFAVFMVHLATI. The Extracellular portion of the chain corresponds to 214–242; it reads PITGTGINPARSFGAAVIYNNEKAWDDQW. An NPA 2 motif is present at residues 221–223; it reads NPA. Residues 243–263 form a helical membrane-spanning segment; it reads IFWVGPFLGALAAAAYHQYIL. Over 264-280 the chain is Cytoplasmic; the sequence is RASAIKALGSFRSNATN. Residues Ser-273 and Ser-276 each carry the phosphoserine modification. Thr-279 is modified (phosphothreonine).

This sequence belongs to the MIP/aquaporin (TC 1.A.8) family. PIP (TC 1.A.8.11) subfamily. Interacts with SYP61 and SYP121 in trafficking vesicles and at the plasma membrane. Highly expressed in flowers, expressed at low levels in siliques, and at low level in leaves and roots. Highly levels in elongating cells in both roots and shoots.

It localises to the cell membrane. In terms of biological role, water channel required to facilitate the transport of water across cell membrane. May be involved in the osmoregulation in plants under high osmotic stress such as under a high salt condition. The protein is Aquaporin PIP2-7 of Arabidopsis thaliana (Mouse-ear cress).